A 571-amino-acid chain; its full sequence is Proline--tRNA ligase (571 aa).

The protein belongs to the class-II aminoacyl-tRNA synthetase family. ProS type 1 subfamily. Homodimer.

The protein localises to the cytoplasm. The enzyme catalyses tRNA(Pro) + L-proline + ATP = L-prolyl-tRNA(Pro) + AMP + diphosphate. Functionally, catalyzes the attachment of proline to tRNA(Pro) in a two-step reaction: proline is first activated by ATP to form Pro-AMP and then transferred to the acceptor end of tRNA(Pro). As ProRS can inadvertently accommodate and process non-cognate amino acids such as alanine and cysteine, to avoid such errors it has two additional distinct editing activities against alanine. One activity is designated as 'pretransfer' editing and involves the tRNA(Pro)-independent hydrolysis of activated Ala-AMP. The other activity is designated 'posttransfer' editing and involves deacylation of mischarged Ala-tRNA(Pro). The misacylated Cys-tRNA(Pro) is not edited by ProRS. In Histophilus somni (strain 2336) (Haemophilus somnus), this protein is Proline--tRNA ligase.